The chain runs to 161 residues: F-box only protein 48 (161 aa).

The interval 1–25 is disordered; it reads MKKTSKKNNNFKIPGTELNSADAER. One can recognise an F-box domain in the interval 32–79; that stretch reads RNFVELLPLEVTYKIFSQLDIQSLCRASRTCTGWNCAIRNNDSLWKPH.

The chain is F-box only protein 48 (Fbxo48) from Mus musculus (Mouse).